A 650-amino-acid polypeptide reads, in one-letter code: Sodium-dependent phosphate transporter 2 (650 aa).

The Extracellular portion of the chain corresponds to 1-5; that stretch reads MAMDG. A helical membrane pass occupies residues 6 to 26; the sequence is YLWMVILGFIIAFILAFSVGA. Topologically, residues 27–46 are cytoplasmic; it reads NDVANSFGTAVGSGVVTLRQ. Residues 47–67 traverse the membrane as a helical segment; it reads ACILASIFETTGSVLLGAKVG. Residues 68–83 lie on the Extracellular side of the membrane; that stretch reads ETIRKGIIDVNLYNDT. N-linked (GlcNAc...) asparagine glycosylation occurs at Asn-81. Residues 84–104 form a helical membrane-spanning segment; that stretch reads VVTLMAGEVSAMVGSAVWQLI. The Cytoplasmic segment spans residues 105–109; it reads ASFLR. A helical membrane pass occupies residues 110–130; sequence LPISGTHCIVGSTIGFSLVAN. At 131-142 the chain is on the extracellular side; that stretch reads GTKGVQWMELVK. A helical transmembrane segment spans residues 143–163; the sequence is IVASWFISPLLSGFMSGVLFV. The Cytoplasmic segment spans residues 164–192; the sequence is LIRMFILTKEDPVPNGLQALPLFYAATIA. A helical membrane pass occupies residues 193–212; sequence INVFSIMYTGAPVLGLSLPI. Position 213 (Trp-213) is a topological domain, extracellular. Residues 214–234 form a helical membrane-spanning segment; the sequence is AIALISFGVALLFAFFVWLFV. Residues 235–482 are Cytoplasmic-facing; it reads CPWMRRKIAG…EEKEEKDTAE (248 aa). A phosphoserine mark is found at Ser-253, Ser-256, Ser-259, Ser-268, Ser-315, and Ser-384. Residues 268-310 are disordered; that stretch reads SPFKELPGAKASDDSAVPLTNPTGEAVGPSEGTSTGNHPRTAY. The helical transmembrane segment at 483–503 threads the bilayer; sequence VHLLFHFLQVLTACFGSFAHG. At 504 to 530 the chain is on the extracellular side; sequence GNDVSNAIGPLVALWLIYEQGGVMQEA. Residues 531–551 form a helical membrane-spanning segment; that stretch reads ATPVWLLFYGGVGICTGLWVW. Residues 552 to 571 are Cytoplasmic-facing; it reads GRRVIQTMGKDLTPITPSSG. The helical transmembrane segment at 572-586 threads the bilayer; sequence FTIELASAFTVVIAS. Topologically, residues 587-593 are extracellular; that stretch reads NIGLPVS. A helical membrane pass occupies residues 594-609; that stretch reads TTHCKVGSVVAVGWIR. Residues 610–621 are Cytoplasmic-facing; the sequence is SRKAVDWHLFRN. A helical transmembrane segment spans residues 622–642; it reads IFVAWFVTVPVAGLFSAAIMA. Topologically, residues 643–650 are extracellular; sequence IFMYGILS.

It belongs to the inorganic phosphate transporter (PiT) (TC 2.A.20) family. Homodimer.

Its subcellular location is the cell membrane. The protein resides in the apical cell membrane. It carries out the reaction 2 Na(+)(out) + phosphate(out) = 2 Na(+)(in) + phosphate(in). Sodium-phosphate symporter which preferentially transports the monovalent form of phosphate with a stoichiometry of two sodium ions per phosphate ion. Plays a critical role in the determination of bone quality and strength by providing phosphate for bone mineralization. Required to maintain normal cerebrospinal fluid phosphate levels. Mediates phosphate-induced calcification of vascular smooth muscle cells (VCMCs) and can functionally compensate for loss of SLC20A1 in VCMCs. In terms of biological role, (Microbial infection) Functions as a retroviral receptor and confers hamster cells susceptibility to infection to Gibbon Ape Leukemia Virus (GaLV) and amphotropic murine leukemia virus (A-MuLV). This is Sodium-dependent phosphate transporter 2 (SLC20A2) from Cricetulus griseus (Chinese hamster).